Here is a 55-residue protein sequence, read N- to C-terminus: Metallothionein-1 (55 aa).

Belongs to the metallothionein superfamily. Type 11 family.

The polypeptide is Metallothionein-1 (MTP1) (Yarrowia lipolytica (strain CLIB 122 / E 150) (Yeast)).